The sequence spans 197 residues: EF-hand calcium-binding domain-containing protein 9 (197 aa).

The Ca(2+) site is built by D58 and D69. EF-hand domains lie at L59–H94, G100–N135, and I136–K171. Residues D149, D153, R155, and E160 each coordinate Ca(2+). Residues K177 to R188 show a composition bias toward basic and acidic residues. The disordered stretch occupies residues K177–K197.

Component of the CatSper complex or CatSpermasome composed of the core pore-forming members CATSPER1, CATSPER2, CATSPER3 and CATSPER4 as well as auxiliary members CATSPERB, CATSPERG, CATSPERD, CATSPERE, CATSPERZ, C2CD6/CATSPERT, TMEM249, TMEM262 and EFCAB9. HSPA1 may be an additional auxiliary complex member. The core complex members CATSPER1, CATSPER2, CATSPER3 and CATSPER4 form a heterotetrameric channel. The auxiliary CATSPERB, CATSPERG, CATSPERD and CATSPERE subunits form a pavilion-like structure over the pore which stabilizes the complex through interactions with CATSPER4, CATSPER3, CATSPER1 and CATSPER2 respectively. TMEM262/CATSPERH interacts with CATSPERB, further stabilizing the complex. C2CD6/CATSPERT interacts at least with CATSPERD and is required for targeting the CatSper complex in the flagellar membrane. Interacts with CATSPERZ; the interaction is direct, Ca(2+)-dependent and connects EFCAB9 with the CatSper complex. Dissociates from CATSPERZ at elevated pH.

The protein localises to the cytoplasm. It localises to the cell projection. It is found in the cilium. The protein resides in the flagellum. In terms of biological role, auxiliary component of the CatSper complex, a complex involved in sperm cell hyperactivation. pH-dependent Ca(2+) sensor required to activate the CatSper channel. Sperm cell hyperactivation is needed for sperm motility which is essential late in the preparation of sperm for fertilization. Associates with the CatSper complex via direct interaction with CATSPERZ, and senses intracellular Ca(2+). Together with CATSPERZ, associates with the CatSper channel pore and is required for the two-row structure of each single CatSper channel. This chain is EF-hand calcium-binding domain-containing protein 9, found in Homo sapiens (Human).